Consider the following 254-residue polypeptide: Low affinity immunoglobulin gamma Fc region receptor III-A (254 aa).

The first 20 residues, 1–20 (MWQLLLPTALLLLVSAGMRA), serve as a signal peptide directing secretion. 2 consecutive Ig-like C2-type domains span residues 24–105 (PKAV…LEVH) and 107–189 (GWLL…VNIT). Disulfide bonds link C47/C89 and C128/C172. An N-linked (GlcNAc...) asparagine glycan is attached at N187. Residues 207-229 (YQVSFCLVMVLLFAVDTGLYFSV) traverse the membrane as a helical segment. The segment at 234 to 254 (PSSTSDWKDHKFKWSKDPQDK) is disordered. Residues 239-254 (DWKDHKFKWSKDPQDK) are compositionally biased toward basic and acidic residues.

In terms of assembly, forms a heterooligomeric complex with ITAM-containing signaling subunits, either a homodimer of CD247, a homodimer of FCER1G or a heterodimer of CD247 and FCER1G, to form a functional receptor complex. Interacts (via transmembrane domain) with signaling subunits; this interaction is a prerequisite for receptor complex expression on the cell surface and intracellular signal transduction. Binds the Fc region of antigen-complexed IgG with a preference for IgG1 and IgG3 isotypes. Interacts with CD2; this interaction is involved in NK cell activation and cytotoxicity. Interacts with S100A4; this interaction inhibits PKC-dependent phosphorylation of FCGR3A. In terms of processing, glycosylated. Glycosylation plays an inhibitory role in the interaction with IgG1 and IgG2. Post-translationally, undergoes rapid ectodomain shedding upon NK cell stimulation. The soluble form is produced by a proteolytic cleavage mediated by ADAM17. Repeated stimulation causes receptor shedding, a mechanism that allows for increased NK cell motility and detachment from opsonized target cells while avoiding activation-induced NK cell apoptosis. Lymphocytes and monocytes.

It is found in the cell membrane. Its subcellular location is the secreted. In terms of biological role, receptor for the invariable Fc fragment of immunoglobulin gamma (IgG). Optimally activated upon binding of clustered antigen-IgG complexes displayed on cell surfaces, triggers lysis of antibody-coated cells, a process known as antibody-dependent cellular cytotoxicity (ADCC). Does not bind free monomeric IgG, thus avoiding inappropriate effector cell activation in the absence of antigenic trigger. Mediates IgG effector functions on natural killer (NK) cells. Binds antigen-IgG complexes generated upon infection and triggers NK cell-dependent cytokine production and degranulation to limit viral load and propagation. Involved in the generation of memory-like adaptive NK cells capable to produce high amounts of IFNG and to efficiently eliminate virus-infected cells via ADCC. Regulates NK cell survival and proliferation, in particular by preventing NK cell progenitor apoptosis. Fc-binding subunit that associates with CD247 and/or FCER1G adapters to form functional signaling complexes. Following the engagement of antigen-IgG complexes, triggers phosphorylation of immunoreceptor tyrosine-based activation motif (ITAM)-containing adapters with subsequent activation of phosphatidylinositol 3-kinase signaling and sustained elevation of intracellular calcium that ultimately drive NK cell activation. The ITAM-dependent signaling coupled to receptor phosphorylation by PKC mediates robust intracellular calcium flux that leads to production of pro-inflammatory cytokines, whereas in the absence of receptor phosphorylation it mainly activates phosphatidylinositol 3-kinase signaling leading to cell degranulation. Costimulates NK cells and trigger lysis of target cells independently of IgG binding. Mediates the antitumor activities of therapeutic antibodies. Upon ligation on monocytes triggers TNFA-dependent ADCC of IgG-coated tumor cells. Mediates enhanced ADCC in response to afucosylated IgGs. This chain is Low affinity immunoglobulin gamma Fc region receptor III-A (FCGR3A), found in Papio anubis (Olive baboon).